We begin with the raw amino-acid sequence, 1217 residues long: Disease resistance protein RPS4 (1217 aa).

In terms of domain architecture, TIR spans Pro14–Leu175. Residue Arg23–Arg28 participates in NAD(+) binding. Positions Ser33 to His34 are important for interaction with RRS1. The active site involves Glu88. The 262-residue stretch at Glu211 to Glu472 folds into the NB-ARC domain. 11 LRR repeats span residues Met581 to Ile606, Leu614 to Pro636, Ile637 to Thr659, Ala682 to Met706, Met708 to Leu728, Ile729 to Ser749, Asp750 to Arg774, Leu796 to Ile818, Ser819 to Tyr842, Leu843 to Gln860, and Leu861 to Cys887. The tract at residues Thr1161 to Thr1195 is disordered. The Nuclear localization signal motif lies at Asn1170–Met1177.

The protein belongs to the disease resistance TIR-NB-LRR family. In terms of assembly, interacts with EDS1. Interacts with SRFR1. Interacts with RRS1.

Its subcellular location is the endomembrane system. The protein resides in the cytoplasm. The protein localises to the nucleus. It catalyses the reaction NAD(+) + H2O = ADP-D-ribose + nicotinamide + H(+). Its function is as follows. Disease resistance (R) protein that specifically recognizes the AvrRps4 type III effector avirulence protein from P.syringae. Resistance proteins guard the plant against pathogens that contain an appropriate avirulence protein via an indirect interaction with this avirulence protein. That triggers a defense system including the hypersensitive response, which restricts the pathogen growth. Probably acts as a NAD(+) hydrolase (NADase): in response to activation, catalyzes cleavage of NAD(+) into ADP-D-ribose (ADPR) and nicotinamide; NAD(+) cleavage triggering a defense system that promotes cell death. The combined presence of both regular and alternative RPS4 transcripts with truncated open reading frames (ORFs) is necessary for function. RPS4 function is regulated at multiple levels, including gene expression, alternative splicing, and protein stability. When over-expressed, confers temperature-conditioned EDS1-dependent auto-immunity. Heterodimerization with RRS1 is required to form a functional complex to recognize AvrRps4 and PopP2. Abscisic acid deficiency enhances nuclear accumulation of RPS4 and its cell death-inducing activity. The chain is Disease resistance protein RPS4 from Arabidopsis thaliana (Mouse-ear cress).